A 211-amino-acid polypeptide reads, in one-letter code: tRNA (guanine-N(7)-)-methyltransferase (211 aa).

Residues Glu44, Asp69, Asp96, and Asp118 each contribute to the S-adenosyl-L-methionine site. Residue Asp118 is part of the active site. Lys122 contributes to the substrate binding site. Residues 124–129 (KHEKRR) form an interaction with RNA region. Substrate-binding positions include Asp154 and 191–194 (TEYE).

The protein belongs to the class I-like SAM-binding methyltransferase superfamily. TrmB family.

It catalyses the reaction guanosine(46) in tRNA + S-adenosyl-L-methionine = N(7)-methylguanosine(46) in tRNA + S-adenosyl-L-homocysteine. Its pathway is tRNA modification; N(7)-methylguanine-tRNA biosynthesis. Its function is as follows. Catalyzes the formation of N(7)-methylguanine at position 46 (m7G46) in tRNA. The sequence is that of tRNA (guanine-N(7)-)-methyltransferase from Streptococcus uberis (strain ATCC BAA-854 / 0140J).